A 422-amino-acid polypeptide reads, in one-letter code: MAPLSCNPPEWEDDERMSFLFSAFKRTRDVNTCDWDGKMKFWIPLILTHARAQGLLSITLSQLENDFRRKGCAPMGLRTVIQEMIRQGTLRKETDFVSGVSSGWLSWGMRQLVIRPLRWTIGTMLGSQVGPDEPLVIPEVIKERAALVLQRYQSSTFRSFPLLCEEEVHTLCAEICPNPSALNLVLLQLQGDKKICVLERAGQKLVKFVRVSVGQVEPISESDLGIYQLQQGEKLLSERLQSAGEESNRLTEEARTYNRAGNKNQALRCLRKRKLVERRITELQNKQDNIQGILERISAAETDRKVVSAYQMGVSALKQALKDVTLEKAESIVDQIQEYCDLQDDLSQTLSSVTDADVDSDDLERELNEILQNEEMIIDLPDVPSGPVIISPKRPTEWKMDQAAHSPADGSFLRSVPEPMLQ.

A coiled-coil region spans residues K234–R304. Residues R394–Q422 are disordered.

The protein belongs to the SNF7 family.

The protein localises to the cytoplasm. It localises to the nucleus envelope. Its function is as follows. ESCRT-III-like protein required to recruit the ESCRT-III complex to the nuclear envelope during late anaphase. Together with SPAST, the ESCRT-III complex promotes nuclear envelope sealing and mitotic spindle disassembly during late anaphase. Plays a role in the endosomal sorting pathway. This Xenopus laevis (African clawed frog) protein is Charged multivesicular body protein 7 (chmp7).